The chain runs to 609 residues: UvrABC system protein C (609 aa).

A GIY-YIG domain is found at 16–94 (SSAGVYRMYD…IKQYMPKYNV (79 aa)). The UVR domain occupies 203-238 (QQVISALVDKMELAAERQAYEQAARFRDQIMALRKV).

It belongs to the UvrC family. In terms of assembly, interacts with UvrB in an incision complex.

The protein resides in the cytoplasm. Its function is as follows. The UvrABC repair system catalyzes the recognition and processing of DNA lesions. UvrC both incises the 5' and 3' sides of the lesion. The N-terminal half is responsible for the 3' incision and the C-terminal half is responsible for the 5' incision. The protein is UvrABC system protein C of Shewanella baltica (strain OS185).